Consider the following 292-residue polypeptide: Light-independent protochlorophyllide reductase iron-sulfur ATP-binding protein (292 aa).

Residues 10–15 (GIGKST) and K39 each bind ATP. Residue S14 coordinates Mg(2+). C95 serves as a coordination point for [4Fe-4S] cluster. ATP is bound at residue 182-183 (NR).

Belongs to the NifH/BchL/ChlL family. In terms of assembly, homodimer. Protochlorophyllide reductase is composed of three subunits; ChlL, ChlN and ChlB. It depends on [4Fe-4S] cluster as a cofactor.

The protein resides in the plastid. The protein localises to the chloroplast. It catalyses the reaction chlorophyllide a + oxidized 2[4Fe-4S]-[ferredoxin] + 2 ADP + 2 phosphate = protochlorophyllide a + reduced 2[4Fe-4S]-[ferredoxin] + 2 ATP + 2 H2O. The protein operates within porphyrin-containing compound metabolism; chlorophyll biosynthesis (light-independent). Component of the dark-operative protochlorophyllide reductase (DPOR) that uses Mg-ATP and reduced ferredoxin to reduce ring D of protochlorophyllide (Pchlide) to form chlorophyllide a (Chlide). This reaction is light-independent. The L component serves as a unique electron donor to the NB-component of the complex, and binds Mg-ATP. The sequence is that of Light-independent protochlorophyllide reductase iron-sulfur ATP-binding protein from Huperzia lucidula (Shining clubmoss).